The sequence spans 195 residues: Small ribosomal subunit protein uS7 (195 aa).

Belongs to the universal ribosomal protein uS7 family. Part of the 30S ribosomal subunit.

Functionally, one of the primary rRNA binding proteins, it binds directly to 16S rRNA where it nucleates assembly of the head domain of the 30S subunit. Is located at the subunit interface close to the decoding center. This chain is Small ribosomal subunit protein uS7, found in Sulfolobus acidocaldarius (strain ATCC 33909 / DSM 639 / JCM 8929 / NBRC 15157 / NCIMB 11770).